We begin with the raw amino-acid sequence, 454 residues long: Protein IQ-DOMAIN 1 (454 aa).

Residues 103-113 (GKSKEEAAAIL) are calmodulin-binding. Residues 107–136 (EEAAAILIQSTFRGHLARRESQVMRGQERL) form the IQ domain. The disordered stretch occupies residues 272–454 (WESSEKEQNT…KGVLKAERTP (183 aa)). The span at 280–328 (NTTNNDNSSVKNSTNRNSQGGETAKSSNRNKLNSSTKPNTPSASSTATR) shows a compositional bias: polar residues. The span at 343–356 (KSSDDEAKSSERNR) shows a compositional bias: basic and acidic residues. The span at 371–388 (LSSSTARRSSNLIPTTKS) shows a compositional bias: polar residues. Low complexity predominate over residues 397–412 (TSSRVAVTTSTTEESS). A Nuclear localization signal motif is present at residues 421 to 428 (KKRLSTSA). A compositionally biased stretch (basic and acidic residues) spans 442-454 (KVEKGVLKAERTP).

It belongs to the IQD family. Binds to multiple calmodulin (CaM) in the presence of Ca(2+)(e.g. CaM1 and CaM2) and CaM-like (e.g. CML8 and CML9) proteins. Interacts with KLCR1. Expressed in roots, flowers, stems, siliques, inflorescence stems and whole shoots. Restricted to the vascular bundles.

Its subcellular location is the nucleus. The protein localises to the nucleolus. It is found in the cytoplasm. It localises to the cytoskeleton. Functionally, may be involved in cooperative interactions with calmodulins or calmodulin-like proteins. Modulates expression of glucosinolate pathway genes. May associate with nucleic acids and regulate gene expression at the transcriptional or post-transcriptional level. Recruits KLCR1 and calmodulin proteins to microtubules, thus being a potential scaffold in cellular signaling and trafficking. The chain is Protein IQ-DOMAIN 1 from Arabidopsis thaliana (Mouse-ear cress).